The primary structure comprises 268 residues: Probable 6-phosphogluconolactonase 1 (268 aa).

It belongs to the glucosamine/galactosamine-6-phosphate isomerase family. 6-phosphogluconolactonase subfamily.

The protein resides in the cytoplasm. It is found in the cytosol. It catalyses the reaction 6-phospho-D-glucono-1,5-lactone + H2O = 6-phospho-D-gluconate + H(+). It participates in carbohydrate degradation; pentose phosphate pathway; D-ribulose 5-phosphate from D-glucose 6-phosphate (oxidative stage): step 2/3. Its function is as follows. Catalyzes the hydrolysis of 6-phosphogluconolactone to 6-phosphogluconate. This Arabidopsis thaliana (Mouse-ear cress) protein is Probable 6-phosphogluconolactonase 1.